A 91-amino-acid polypeptide reads, in one-letter code: MSRSIKKGPFVDAHLIKKVDTAVAGKDKKPIKTWSRRSTILPEFIGLTIAVHNGRQHVPVYINENMVGHKLGEFALTRTFKGHAADKKAKR.

Belongs to the universal ribosomal protein uS19 family.

In terms of biological role, protein S19 forms a complex with S13 that binds strongly to the 16S ribosomal RNA. This Bordetella petrii (strain ATCC BAA-461 / DSM 12804 / CCUG 43448) protein is Small ribosomal subunit protein uS19.